We begin with the raw amino-acid sequence, 141 residues long: SsrA-binding protein (141 aa).

Belongs to the SmpB family.

Its subcellular location is the cytoplasm. Functionally, required for rescue of stalled ribosomes mediated by trans-translation. Binds to transfer-messenger RNA (tmRNA), required for stable association of tmRNA with ribosomes. tmRNA and SmpB together mimic tRNA shape, replacing the anticodon stem-loop with SmpB. tmRNA is encoded by the ssrA gene; the 2 termini fold to resemble tRNA(Ala) and it encodes a 'tag peptide', a short internal open reading frame. During trans-translation Ala-aminoacylated tmRNA acts like a tRNA, entering the A-site of stalled ribosomes, displacing the stalled mRNA. The ribosome then switches to translate the ORF on the tmRNA; the nascent peptide is terminated with the 'tag peptide' encoded by the tmRNA and targeted for degradation. The ribosome is freed to recommence translation, which seems to be the essential function of trans-translation. This is SsrA-binding protein from Ureaplasma parvum serovar 3 (strain ATCC 27815 / 27 / NCTC 11736).